Consider the following 349-residue polypeptide: tRNA pseudouridine synthase D (349 aa).

Phenylalanine 27 is a substrate binding site. Aspartate 80 acts as the Nucleophile in catalysis. Residue asparagine 129 participates in substrate binding. The region spanning 155–303 is the TRUD domain; sequence GVPNYFGAQR…VEAARRAMLL (149 aa). A substrate-binding site is contributed by phenylalanine 329.

It belongs to the pseudouridine synthase TruD family.

The catalysed reaction is uridine(13) in tRNA = pseudouridine(13) in tRNA. In terms of biological role, responsible for synthesis of pseudouridine from uracil-13 in transfer RNAs. The protein is tRNA pseudouridine synthase D of Escherichia coli O45:K1 (strain S88 / ExPEC).